A 148-amino-acid polypeptide reads, in one-letter code: Small ribosomal subunit protein eS19G (148 aa).

Belongs to the eukaryotic ribosomal protein eS19 family.

Its function is as follows. Elimination of the ALEP-1 gene from all somatic cells in its fully activate state may represent an alternative way to gene regulation. This Ascaris suum (Pig roundworm) protein is Small ribosomal subunit protein eS19G (RPS19G).